The following is a 202-amino-acid chain: NADH-ubiquinone oxidoreductase chain 6 (202 aa).

Transmembrane regions (helical) follow at residues 1–21 (MVTM…IMVI), 29–49 (SVFW…LLGV), 52–72 (IALM…LFVI), 96–116 (VPIG…SWLI), and 156–176 (YYLF…AIVL).

Belongs to the complex I subunit 6 family.

It is found in the mitochondrion membrane. It catalyses the reaction a ubiquinone + NADH + 5 H(+)(in) = a ubiquinol + NAD(+) + 4 H(+)(out). Functionally, core subunit of the mitochondrial membrane respiratory chain NADH dehydrogenase (Complex I) that is believed to belong to the minimal assembly required for catalysis. Complex I functions in the transfer of electrons from NADH to the respiratory chain. The immediate electron acceptor for the enzyme is believed to be ubiquinone. The protein is NADH-ubiquinone oxidoreductase chain 6 (ND6) of Metridium senile (Brown sea anemone).